A 132-amino-acid polypeptide reads, in one-letter code: Small ribosomal subunit protein uS8 (132 aa).

Belongs to the universal ribosomal protein uS8 family. As to quaternary structure, part of the 30S ribosomal subunit. Contacts proteins S5 and S12.

Its function is as follows. One of the primary rRNA binding proteins, it binds directly to 16S rRNA central domain where it helps coordinate assembly of the platform of the 30S subunit. The protein is Small ribosomal subunit protein uS8 of Clostridium kluyveri (strain NBRC 12016).